The following is a 500-amino-acid chain: Small ribosomal subunit protein uS3m (500 aa).

It belongs to the universal ribosomal protein uS3 family.

The protein resides in the mitochondrion. This chain is Small ribosomal subunit protein uS3m (RPS3), found in Prototheca wickerhamii.